A 645-amino-acid chain; its full sequence is Mediator of RNA polymerase II transcription subunit 17 (645 aa).

The segment at 215-234 (KAEDEESGSPPASPSGSGAA) is disordered. Over residues 222-234 (GSPPASPSGSGAA) the composition is skewed to low complexity.

This sequence belongs to the Mediator complex subunit 17 family. In terms of assembly, component of the Mediator complex.

The protein localises to the nucleus. Its function is as follows. Component of the Mediator complex, a coactivator involved in the regulated transcription of nearly all RNA polymerase II-dependent genes. Mediator functions as a bridge to convey information from gene-specific regulatory proteins to the basal RNA polymerase II transcription machinery. Mediator is recruited to promoters by direct interactions with regulatory proteins and serves as a scaffold for the assembly of a functional preinitiation complex with RNA polymerase II and the general transcription factors. This Anopheles gambiae (African malaria mosquito) protein is Mediator of RNA polymerase II transcription subunit 17 (MED17).